Here is a 224-residue protein sequence, read N- to C-terminus: MSNYQQESSYQYSDRSNNGQQQEQQEKKEVEHSSYTHTDVKVNMPNLIAPFISSSAGLAQELVGEGFQASVSRITGASGELTVIDTEAETEEARRDMEAKAREQELLSRQFEKELERKTEAYRKQQEVETEKIRKELEKQHLRDVEFRKELMEQTIENQKRQIDLEARYAKKELERERNKVKRVLERSKFHTDIQVNMEAAAGSTHSGSSSVAVSESEKFQTNN.

Residues 1 to 13 (MSNYQQESSYQYS) are compositionally biased toward low complexity. Positions 1–38 (MSNYQQESSYQYSDRSNNGQQQEQQEKKEVEHSSYTHT) are disordered. Over residues 24-38 (QQEKKEVEHSSYTHT) the composition is skewed to basic and acidic residues. Positions 83–191 (VIDTEAETEE…KRVLERSKFH (109 aa)) form a coiled coil. 2 CAHS motif regions span residues 122-140 (YRKQ…LEKQ) and 159-177 (QKRQ…LERE). Positions 200–215 (AAAGSTHSGSSSVAVS) are enriched in low complexity. Residues 200–224 (AAAGSTHSGSSSVAVSESEKFQTNN) form a disordered region.

Belongs to the Cytosolic-abundant heat soluble protein (CAHS) family.

It localises to the cytoplasm. Its function is as follows. CAHS proteins are cytosolic heat soluble proteins that seem to contribute to the anhydrobiosis in tardigrades, but their specific mechanisms are yet to be identified. It is possible that protection during anhydrobiosis might occur via the stabilization of vitrifying small molecules such as sugars, but not via the direct glass transition of CAHS proteins themselves. The protein is Cytosolic-abundant heat soluble protein 77580 of Hypsibius exemplaris (Freshwater tardigrade).